A 296-amino-acid polypeptide reads, in one-letter code: Cytidine deaminase (296 aa).

CMP/dCMP-type deaminase domains lie at 47-167 and 186-296; these read TEAE…FGPK and DSSD…VDPV. Residue 88–90 coordinates substrate; that stretch reads NLE. His-101 is a binding site for Zn(2+). The active-site Proton donor is the Glu-103. Zn(2+) contacts are provided by Cys-128 and Cys-131.

Belongs to the cytidine and deoxycytidylate deaminase family. As to quaternary structure, homodimer. Zn(2+) serves as cofactor.

The enzyme catalyses cytidine + H2O + H(+) = uridine + NH4(+). It carries out the reaction 2'-deoxycytidine + H2O + H(+) = 2'-deoxyuridine + NH4(+). This enzyme scavenges exogenous and endogenous cytidine and 2'-deoxycytidine for UMP synthesis. The protein is Cytidine deaminase of Shewanella sp. (strain ANA-3).